The chain runs to 360 residues: Teichoic acids export ATP-binding protein TagH (360 aa).

The ABC transporter domain maps to 24 to 245 (LKAMFFPKTR…YEDYINWFNK (222 aa)). 59–66 (GINGSGKS) serves as a coordination point for ATP. The unknown stretch occupies residues 246–360 (LSKEEKEAHK…GDIDNSDVSL (115 aa)). The segment at 270 to 290 (EEQENGKAGSGGDGTQPIVQP) is disordered.

It belongs to the ABC transporter superfamily. Teichoic acids exporter (TC 3.A.1.104.1) family. In terms of assembly, the complex is composed of two ATP-binding proteins (TagH) and two transmembrane proteins (TagG).

It is found in the cell membrane. It catalyses the reaction ATP + H2O + teichoic acidSide 1 = ADP + phosphate + teichoic acidSide 2.. In terms of biological role, part of the ABC transporter complex TagGH involved in teichoic acids export. Responsible for energy coupling to the transport system. The sequence is that of Teichoic acids export ATP-binding protein TagH from Shouchella clausii (strain KSM-K16) (Alkalihalobacillus clausii).